The chain runs to 204 residues: Peptidyl-tRNA hydrolase (204 aa).

Y14 contributes to the tRNA binding site. Residue H19 is the Proton acceptor of the active site. Residues F64, N66, and N112 each coordinate tRNA.

This sequence belongs to the PTH family. Monomer.

Its subcellular location is the cytoplasm. It carries out the reaction an N-acyl-L-alpha-aminoacyl-tRNA + H2O = an N-acyl-L-amino acid + a tRNA + H(+). Functionally, hydrolyzes ribosome-free peptidyl-tRNAs (with 1 or more amino acids incorporated), which drop off the ribosome during protein synthesis, or as a result of ribosome stalling. Catalyzes the release of premature peptidyl moieties from peptidyl-tRNA molecules trapped in stalled 50S ribosomal subunits, and thus maintains levels of free tRNAs and 50S ribosomes. The sequence is that of Peptidyl-tRNA hydrolase from Azorhizobium caulinodans (strain ATCC 43989 / DSM 5975 / JCM 20966 / LMG 6465 / NBRC 14845 / NCIMB 13405 / ORS 571).